Reading from the N-terminus, the 153-residue chain is Cytochrome c-type biogenesis protein CcmE (153 aa).

Over 1-8 (MTPVQRRR) the chain is Cytoplasmic. The chain crosses the membrane as a helical; Signal-anchor for type II membrane protein span at residues 9 to 29 (LAWVLLALLASGLATALVAMA). Residues 30–153 (LERNIAYLYT…DVPVTAPEVR (124 aa)) are Extracellular-facing. Heme contacts are provided by histidine 123 and tyrosine 127.

Belongs to the CcmE/CycJ family.

It is found in the cell membrane. In terms of biological role, heme chaperone required for the biogenesis of c-type cytochromes. Transiently binds heme delivered by CcmC and transfers the heme to apo-cytochromes in a process facilitated by CcmF and CcmH. The polypeptide is Cytochrome c-type biogenesis protein CcmE (Stenotrophomonas maltophilia (strain K279a)).